A 319-amino-acid polypeptide reads, in one-letter code: MCSLPGSRKPLLRVAVTGGTHGNEMCGVYLARYWLQNPGELQRPSFSAMPVLANPAATAACRRYIDRDLNRTFTLTFLGSTATPDDPYEVKRAQELNQLLGPKGTCQAFDFILDLHNTTANTGACLISEVSQNPFNLHLCHYLQLQNPGLPCRLFQFEPPGTESYSMDSVSKNGISLELGPQPQGVLRAELFSQMRAMVASILDFIELFNQGMEFPAFEMEVYKNLGSVDFPRTTDGHLTGTVHSRLQDHDFEPLRPGEPIFKLFSGEDVLYEGDSVVYPLFVNEAAYYEKRVAFLKSEKIRISVPALPGLTPSSTQTP.

The hydrolytic domain stretch occupies residues 1-210 (MCSLPGSRKP…SILDFIELFN (210 aa)). His-21 and Glu-24 together coordinate Zn(2+). Residues Arg-63 and 70-71 (NR) contribute to the substrate site. His-116 contributes to the Zn(2+) binding site. Glu-178 and Tyr-288 together coordinate substrate. Residues 211-318 (QGMEFPAFEM…PGLTPSSTQT (108 aa)) form a shielding domain region. Position 318 is a phosphothreonine (Thr-318).

It belongs to the AspA/AstE family. Aspartoacylase subfamily. Exists as a mixture of homodimers and homotetramer, both catalytically active. Requires Zn(2+) as cofactor.

Its subcellular location is the apical cell membrane. The protein localises to the cytoplasm. The catalysed reaction is an N-acyl-aromatic L-alpha-amino acid + H2O = an aromatic L-alpha-amino acid + a carboxylate. It carries out the reaction an N-acetyl-L-cysteine-S-conjugate + H2O = an S-substituted L-cysteine + acetate. Its function is as follows. Plays an important role in deacetylating mercapturic acids in kidney proximal tubules. Also acts on N-acetyl-aromatic amino acids. The polypeptide is N-acyl-aromatic-L-amino acid amidohydrolase (carboxylate-forming) (Acy3) (Rattus norvegicus (Rat)).